Consider the following 316-residue polypeptide: Nod factor export ATP-binding protein I (316 aa).

An ABC transporter domain is found at 18 to 248 (IDFSDVSKTY…LIGCEVIEIY (231 aa)). 50 to 57 (GPNGAGKS) is an ATP binding site.

Belongs to the ABC transporter superfamily. Lipooligosaccharide exporter (TC 3.A.1.102) family. As to quaternary structure, the complex is composed of two ATP-binding proteins (NodI) and two transmembrane proteins (NodJ).

The protein localises to the cell inner membrane. Its function is as follows. Part of the ABC transporter complex NodIJ involved in the export of the nodulation factors (Nod factors), the bacterial signal molecules that induce symbiosis and subsequent nodulation induction. Nod factors are LCO (lipo-chitin oligosaccharide), a modified beta-1,4-linked N-acetylglucosamine oligosaccharide. This subunit is responsible for energy coupling to the transport system. This is Nod factor export ATP-binding protein I from Rhizobium etli (strain ATCC 51251 / DSM 11541 / JCM 21823 / NBRC 15573 / CFN 42).